Reading from the N-terminus, the 566-residue chain is Tissue-type plasminogen activator (566 aa).

An N-terminal signal peptide occupies residues 1 to 21 (MMSAMKTEFLCVLLLCGAVFT). Residues 22–33 (SPSQETYRRLRR) constitute a propeptide that is removed on maturation. A propeptide spans 34–36 (GAR) (removed by plasmin). A Fibronectin type-I domain is found at 40–82 (VTCRDGKTQMTYRQHDSWLRPLLRGNQVEHCWCDGGRAQCHSV). Cystine bridges form between cysteine 42/cysteine 72, cysteine 70/cysteine 79, cysteine 87/cysteine 98, cysteine 92/cysteine 109, cysteine 111/cysteine 120, cysteine 128/cysteine 209, cysteine 149/cysteine 191, cysteine 180/cysteine 204, cysteine 219/cysteine 300, cysteine 240/cysteine 282, cysteine 271/cysteine 295, cysteine 303/cysteine 434, cysteine 346/cysteine 362, cysteine 354/cysteine 423, cysteine 448/cysteine 523, cysteine 480/cysteine 496, and cysteine 513/cysteine 541. The tract at residues 43-53 (RDGKTQMTYRQ) is important for binding to annexin A2. The region spanning 83-121 (PVRSCSEPWCFNGGTCRQALYSSDFVCQCPEGFMGKLCE) is the EGF-like domain. Kringle domains are found at residues 128-209 (CYKD…TPAC) and 219-300 (CYTG…VPQC). The N-linked (GlcNAc...) asparagine glycan is linked to asparagine 153. Positions 315-565 (IKGGLFADIT…YLDWIRDNTR (251 aa)) constitute a Peptidase S1 domain. Catalysis depends on charge relay system residues histidine 361 and aspartate 410. Residue asparagine 487 is glycosylated (N-linked (GlcNAc...) asparagine). Serine 517 acts as the Charge relay system in catalysis.

It belongs to the peptidase S1 family. As to quaternary structure, heterodimer of chain A and chain B held by a disulfide bond. Binds to fibrin with high affinity. This interaction leads to an increase in the catalytic efficiency of the enzyme due to an increase in affinity for plasminogen. Similarly, binding to heparin increases the activation of plasminogen. Binds to annexin A2, cytokeratin-8, fibronectin and laminin. Binds to mannose receptor and the low-density lipoprotein receptor-related protein (LRP1); these proteins are involved in TPA clearance. Binds LRP1B; binding is followed by internalization and degradation. Forms heterodimer with SERPINA5. Interacts with SERPINE1. In complex with SERPINE1, interacts with SORL1. The single chain, almost fully active enzyme, can be further processed into a two-chain fully active form by a cleavage after Arg-314 catalyzed by plasmin, tissue kallikrein or factor Xa.

Its subcellular location is the secreted. The protein resides in the extracellular space. The enzyme catalyses Specific cleavage of Arg-|-Val bond in plasminogen to form plasmin.. Its activity is regulated as follows. Inhibited by SERPINA5. Inhibited by SERPINE1. Its function is as follows. Converts the abundant, but inactive, zymogen plasminogen to plasmin by hydrolyzing a single Arg-Val bond in plasminogen. By controlling plasmin-mediated proteolysis, it plays an important role in tissue remodeling and degradation, in cell migration and many other physiopathological events. During oocyte activation, plays a role in cortical granule reaction in the zona reaction, which contributes to the block to polyspermy. This chain is Tissue-type plasminogen activator (PLAT), found in Bos taurus (Bovine).